A 206-amino-acid polypeptide reads, in one-letter code: Small ribosomal subunit protein uS4 (206 aa).

The segment at 18-45 (NIWGRPKSPVNRREYGPGQHGQRRKGKM) is disordered. The S4 RNA-binding domain occupies 94–157 (RRLDAVVYRA…KQLASVLEAV (64 aa)).

The protein belongs to the universal ribosomal protein uS4 family. As to quaternary structure, part of the 30S ribosomal subunit. Contacts protein S5. The interaction surface between S4 and S5 is involved in control of translational fidelity.

In terms of biological role, one of the primary rRNA binding proteins, it binds directly to 16S rRNA where it nucleates assembly of the body of the 30S subunit. With S5 and S12 plays an important role in translational accuracy. The chain is Small ribosomal subunit protein uS4 from Ruegeria pomeroyi (strain ATCC 700808 / DSM 15171 / DSS-3) (Silicibacter pomeroyi).